We begin with the raw amino-acid sequence, 380 residues long: Tubulin alpha chain (380 aa).

Residues glutamate 46, serine 115, glycine 119, threonine 120, threonine 154, asparagine 181, and asparagine 202 each contribute to the GTP site. Glutamate 46 lines the Mg(2+) pocket. Glutamate 228 is a catalytic residue.

It belongs to the tubulin family. As to quaternary structure, dimer of alpha and beta chains. A typical microtubule is a hollow water-filled tube with an outer diameter of 25 nm and an inner diameter of 15 nM. Alpha-beta heterodimers associate head-to-tail to form protofilaments running lengthwise along the microtubule wall with the beta-tubulin subunit facing the microtubule plus end conferring a structural polarity. Microtubules usually have 13 protofilaments but different protofilament numbers can be found in some organisms and specialized cells. Requires Mg(2+) as cofactor.

Its subcellular location is the cytoplasm. The protein resides in the cytoskeleton. The catalysed reaction is GTP + H2O = GDP + phosphate + H(+). Its function is as follows. Tubulin is the major constituent of microtubules, a cylinder consisting of laterally associated linear protofilaments composed of alpha- and beta-tubulin heterodimers. Microtubules grow by the addition of GTP-tubulin dimers to the microtubule end, where a stabilizing cap forms. Below the cap, tubulin dimers are in GDP-bound state, owing to GTPase activity of alpha-tubulin. In Encephalitozoon hellem (Microsporidian parasite), this protein is Tubulin alpha chain (TUB1).